The sequence spans 208 residues: Protein GrpE (208 aa).

A compositionally biased stretch (basic and acidic residues) spans 1-25 (MVDNKDFNEELKESIQEELDNETKS). Residues 1–38 (MVDNKDFNEELKESIQEELDNETKSENPNIDEEVEEVS) form a disordered region. The segment covering 29-38 (NIDEEVEEVS) has biased composition (acidic residues).

This sequence belongs to the GrpE family. Homodimer.

The protein localises to the cytoplasm. Functionally, participates actively in the response to hyperosmotic and heat shock by preventing the aggregation of stress-denatured proteins, in association with DnaK and GrpE. It is the nucleotide exchange factor for DnaK and may function as a thermosensor. Unfolded proteins bind initially to DnaJ; upon interaction with the DnaJ-bound protein, DnaK hydrolyzes its bound ATP, resulting in the formation of a stable complex. GrpE releases ADP from DnaK; ATP binding to DnaK triggers the release of the substrate protein, thus completing the reaction cycle. Several rounds of ATP-dependent interactions between DnaJ, DnaK and GrpE are required for fully efficient folding. The polypeptide is Protein GrpE (Clostridium perfringens (strain SM101 / Type A)).